Here is a 329-residue protein sequence, read N- to C-terminus: Trans-1,2-dihydrobenzene-1,2-diol dehydrogenase (329 aa).

Belongs to the Gfo/Idh/MocA family. Homodimer. Lens, liver and small intestine.

It catalyses the reaction (1R,2R)-1,2-dihydrobenzene-1,2-diol + NADP(+) = catechol + NADPH + H(+). The catalysed reaction is D-xylose + NADP(+) = D-xylono-1,5-lactone + NADPH + H(+). Stimulated by various salts. This Oryctolagus cuniculus (Rabbit) protein is Trans-1,2-dihydrobenzene-1,2-diol dehydrogenase (DHDH).